The primary structure comprises 90 residues: Probable Fe(2+)-trafficking protein (90 aa).

Belongs to the Fe(2+)-trafficking protein family.

Could be a mediator in iron transactions between iron acquisition and iron-requiring processes, such as synthesis and/or repair of Fe-S clusters in biosynthetic enzymes. This Pseudoalteromonas atlantica (strain T6c / ATCC BAA-1087) protein is Probable Fe(2+)-trafficking protein.